The chain runs to 60 residues: UPF0337 protein SSP1134 (60 aa).

The interval 1–41 (MADENKFEQAKGNVKETVGNVTDNKELENEGKEDKTSGKAK) is disordered. Residues 23–41 (DNKELENEGKEDKTSGKAK) show a composition bias toward basic and acidic residues.

This sequence belongs to the UPF0337 (CsbD) family.

This is UPF0337 protein SSP1134 from Staphylococcus saprophyticus subsp. saprophyticus (strain ATCC 15305 / DSM 20229 / NCIMB 8711 / NCTC 7292 / S-41).